The primary structure comprises 152 residues: Keratin, high-sulfur matrix protein, B2C (152 aa).

The residue at position 2 (Ala2) is an N-acetylalanine. 3 repeats span residues 27–36 (STCSQTSCCQ), 37–46 (PTSIQTSCCQ), and 47–56 (PTCLQTSGCE).

In terms of biological role, the keratin products of mammalian epidermal derivatives such as wool and hair consist of microfibrils embedded in a rigid matrix of other proteins. The matrix proteins include the high-sulfur and high-tyrosine keratins, having molecular weights of 6-20 kDa, whereas the microfibrils contain the larger, low-sulfur keratins (40-56 kDa). This is Keratin, high-sulfur matrix protein, B2C from Ovis aries (Sheep).